Here is a 31-residue protein sequence, read N- to C-terminus: Cytochrome b6-f complex subunit 6 (31 aa).

A helical transmembrane segment spans residues isoleucine 4–glycine 24.

This sequence belongs to the PetL family. As to quaternary structure, the 4 large subunits of the cytochrome b6-f complex are cytochrome b6, subunit IV (17 kDa polypeptide, PetD), cytochrome f and the Rieske protein, while the 4 small subunits are PetG, PetL, PetM and PetN. The complex functions as a dimer.

The protein resides in the plastid. The protein localises to the chloroplast thylakoid membrane. Functionally, component of the cytochrome b6-f complex, which mediates electron transfer between photosystem II (PSII) and photosystem I (PSI), cyclic electron flow around PSI, and state transitions. PetL is important for photoautotrophic growth as well as for electron transfer efficiency and stability of the cytochrome b6-f complex. This Pelargonium hortorum (Common geranium) protein is Cytochrome b6-f complex subunit 6.